The sequence spans 552 residues: Macrophage colony-stimulating factor 1 (552 aa).

Positions 1–32 (MTARGAAGRCPSSTWLGSRLLLVCLLMSRSIA) are cleaved as a signal peptide. Over 33–492 (KEVSEHCSHM…EGSSDPQIPE (460 aa)) the chain is Extracellular. 3 cysteine pairs are disulfide-bonded: cysteine 39/cysteine 122, cysteine 80/cysteine 171, and cysteine 134/cysteine 178. Asparagine 107, asparagine 154, and asparagine 172 each carry an N-linked (GlcNAc...) asparagine glycan. Positions 197–207 (TPSSDPASASP) are enriched in low complexity. A disordered region spans residues 197-293 (TPSSDPASAS…GGPVPGVEDI (97 aa)). Residues 254 to 267 (PRSTCQTLESTEQP) show a composition bias toward polar residues. Residues 268 to 278 (NHGDRLTEDSQ) show a composition bias toward basic and acidic residues. The O-linked (Xyl...) (chondroitin sulfate) serine glycan is linked to serine 308. Disordered stretches follow at residues 321–412 (KFSP…RVSN) and 439–465 (GKRSTRDRRSPAELEGGSASEGAARPV). 3 stretches are compositionally biased toward basic and acidic residues: residues 350–364 (STEDQKPVDITDRPL), 382–396 (EKTDGTSTLREDHQE), and 439–450 (GKRSTRDRRSPA). O-linked (GalNAc...) threonine glycosylation is present at threonine 360. The helical transmembrane segment at 493 to 515 (SVFHLLVPGIILVLLTVGGLLFY) threads the bilayer. Over 516–552 (KWKWRSHRDPQTLDSSVGRPEDSSLTQDEDRQVELPV) the chain is Cytoplasmic. The tract at residues 525–552 (PQTLDSSVGRPEDSSLTQDEDRQVELPV) is disordered. Residues 543–552 (DEDRQVELPV) show a composition bias toward basic and acidic residues.

Homodimer or heterodimer; disulfide-linked. Likely to exist in multiple forms: homodimer consisting of 2 identical 150-200 kDa proteoglycan subunits, heterodimer consisting of a 150-200 kDa proteoglycan subunit and a truncated 43 kDa subunit, and homodimer consisting of 2 identical 43 kDa subunits. Interacts with CSF1R. In terms of processing, N-glycosylated. Post-translationally, O-glycosylated; contains chondroitin sulfate.

Its subcellular location is the cell membrane. The protein resides in the secreted. The protein localises to the extracellular space. Its function is as follows. Cytokine that plays an essential role in the regulation of survival, proliferation and differentiation of hematopoietic precursor cells, especially mononuclear phagocytes, such as macrophages and monocytes. Promotes the release of pro-inflammatory chemokines, and thereby plays an important role in innate immunity and in inflammatory processes. Plays an important role in the regulation of osteoclast proliferation and differentiation, the regulation of bone resorption, and is required for normal bone development. Required for normal male and female fertility. Promotes reorganization of the actin cytoskeleton, regulates formation of membrane ruffles, cell adhesion and cell migration. Plays a role in lipoprotein clearance. In Mus musculus (Mouse), this protein is Macrophage colony-stimulating factor 1 (Csf1).